The sequence spans 463 residues: L-seryl-tRNA(Sec) selenium transferase (463 aa).

Lys295 is subject to N6-(pyridoxal phosphate)lysine.

This sequence belongs to the SelA family. Homodecamer; pentamer of dimers. Binds only one seryl-tRNA(Sec) per dimer. Pyridoxal 5'-phosphate serves as cofactor.

The protein resides in the cytoplasm. The catalysed reaction is L-seryl-tRNA(Sec) + selenophosphate + H(+) = L-selenocysteinyl-tRNA(Sec) + phosphate. Its pathway is aminoacyl-tRNA biosynthesis; selenocysteinyl-tRNA(Sec) biosynthesis; selenocysteinyl-tRNA(Sec) from L-seryl-tRNA(Sec) (bacterial route): step 1/1. Converts seryl-tRNA(Sec) to selenocysteinyl-tRNA(Sec) required for selenoprotein biosynthesis. This is L-seryl-tRNA(Sec) selenium transferase from Escherichia coli O7:K1 (strain IAI39 / ExPEC).